We begin with the raw amino-acid sequence, 109 residues long: B melanoma antigen 3 (109 aa).

A signal peptide spans 1–17; that stretch reads MAAGVVFLALSAQLLQA.

It belongs to the BAGE family. In terms of tissue distribution, not expressed in normal tissues except in testis. Expressed in melanoma, bladder and lung carcinomas.

It localises to the secreted. Its function is as follows. Unknown. Candidate gene encoding tumor antigens. The polypeptide is B melanoma antigen 3 (BAGE3) (Homo sapiens (Human)).